We begin with the raw amino-acid sequence, 183 residues long: Ras-related protein Rap-2a (183 aa).

Gly-10 to Ser-17 provides a ligand contact to GTP. The short motif at Tyr-32–Tyr-40 is the Effector region element. GTP-binding positions include Asp-57 to Thr-61 and Asn-116 to Asp-119. S-palmitoyl cysteine attachment occurs at residues Cys-176 and Cys-177. The residue at position 180 (Cys-180) is a Cysteine methyl ester. Cys-180 is lipidated: S-farnesyl cysteine. The propeptide at Val-181–Leu-183 is removed in mature form.

It belongs to the small GTPase superfamily. Ras family. Interacts (GTP-bound form) with RUNDC3A. Interacts with PLCE1. Interacts with ARHGAP29, SGSM1, SGSM2 and SGSM3. Interacts (GTP-bound form preferentially) with TNIK (via the CNH domain); the interaction is direct and recruits RAP2A to the E3 ubiquitin ligase NEDD4. Interacts with MINK1. Interacts (GTP-bound form preferentially) with MAP4K4. Interacts with cytoskeletal actin. Interacts with RGS14; the interaction is GTP-dependent. In terms of processing, ubiquitinated; undergoes 'Lys-63' monoubiquitination and diubiquitination by NEDD4. Multiple lysine residues are probably modified. Ubiquitination requires TNIK, prevents interaction with effectors and inactivates RAP2A. Ubiquitination by the ECS(RAB40B) complex leads to RAP2A localization to lamellipodia plasma membrane, activation, and regulation of sorting at early endosomes for recycling to the lamellipodia plasma membrane. Palmitoylated. Palmitoylation is required for association with recycling endosome membranes and activation of TNIK.

Its subcellular location is the midbody. The protein resides in the cell projection. The protein localises to the lamellipodium membrane. It is found in the golgi apparatus. It localises to the recycling endosome membrane. Its subcellular location is the lysosome. It catalyses the reaction GTP + H2O = GDP + phosphate + H(+). With respect to regulation, activated by the guanine nucleotide-exchange factors RAPGEF3 and RAPGEF4 in a cAMP-dependent manner. Nucleotide exchange is also specifically stimulated by RAPGEF5, RASGEF1A and RASGEF1B. In terms of biological role, small GTP-binding protein which cycles between a GDP-bound inactive and a GTP-bound active form. In its active form interacts with and regulates several effectors including MAP4K4, MINK1 and TNIK. Part of a signaling complex composed of NEDD4, RAP2A and TNIK which regulates neuronal dendrite extension and arborization during development. More generally, it is part of several signaling cascades and may regulate cytoskeletal rearrangements, cell migration, cell adhesion and cell spreading. This chain is Ras-related protein Rap-2a (RAP2A), found in Sus scrofa (Pig).